The sequence spans 292 residues: 2-(5''-triphosphoribosyl)-3'-dephosphocoenzyme-A synthase (292 aa).

Belongs to the CitG/MdcB family.

The enzyme catalyses 3'-dephospho-CoA + ATP = 2'-(5''-triphospho-alpha-D-ribosyl)-3'-dephospho-CoA + adenine. In terms of biological role, catalyzes the formation of 2-(5''-triphosphoribosyl)-3'-dephosphocoenzyme-A, the precursor of the prosthetic group of the holo-acyl carrier protein (gamma chain) of citrate lyase, from ATP and dephospho-CoA. The polypeptide is 2-(5''-triphosphoribosyl)-3'-dephosphocoenzyme-A synthase (Escherichia coli (strain ATCC 8739 / DSM 1576 / NBRC 3972 / NCIMB 8545 / WDCM 00012 / Crooks)).